Consider the following 475-residue polypeptide: Ribulose bisphosphate carboxylase large chain (475 aa).

Positions methionine 1–valine 2 are excised as a propeptide. Proline 3 bears the N-acetylproline mark. Position 14 is an N6,N6,N6-trimethyllysine (lysine 14). Residues asparagine 123 and threonine 173 each contribute to the substrate site. Residue lysine 175 is the Proton acceptor of the active site. Substrate is bound at residue lysine 177. 3 residues coordinate Mg(2+): lysine 201, aspartate 203, and glutamate 204. Lysine 201 carries the post-translational modification N6-carboxylysine. Histidine 294 functions as the Proton acceptor in the catalytic mechanism. The substrate site is built by arginine 295, histidine 327, and serine 379.

The protein belongs to the RuBisCO large chain family. Type I subfamily. Heterohexadecamer of 8 large chains and 8 small chains. The cofactor is Mg(2+).

It is found in the plastid. Its subcellular location is the chloroplast. The catalysed reaction is 2 (2R)-3-phosphoglycerate + 2 H(+) = D-ribulose 1,5-bisphosphate + CO2 + H2O. It carries out the reaction D-ribulose 1,5-bisphosphate + O2 = 2-phosphoglycolate + (2R)-3-phosphoglycerate + 2 H(+). Its function is as follows. RuBisCO catalyzes two reactions: the carboxylation of D-ribulose 1,5-bisphosphate, the primary event in carbon dioxide fixation, as well as the oxidative fragmentation of the pentose substrate in the photorespiration process. Both reactions occur simultaneously and in competition at the same active site. The chain is Ribulose bisphosphate carboxylase large chain from Dunaliella tertiolecta (Green alga).